The sequence spans 211 residues: Ubiquitin-conjugating enzyme E2 S (211 aa).

A UBC core domain is found at 11-157 (HVIRQVYKEV…ARLMTEIHAH (147 aa)). The active-site Glycyl thioester intermediate is the Cys-95. The span at 157 to 167 (HSSSLRGKDPT) shows a compositional bias: basic and acidic residues. The tract at residues 157-211 (HSSSLRGKDPTDPCSSASVTGALGDGPMAKKHAGDRDKKLAAKKKTDKKRALRRL) is disordered. The span at 197–211 (AAKKKTDKKRALRRL) shows a compositional bias: basic residues.

This sequence belongs to the ubiquitin-conjugating enzyme family.

The catalysed reaction is S-ubiquitinyl-[E1 ubiquitin-activating enzyme]-L-cysteine + [E2 ubiquitin-conjugating enzyme]-L-cysteine = [E1 ubiquitin-activating enzyme]-L-cysteine + S-ubiquitinyl-[E2 ubiquitin-conjugating enzyme]-L-cysteine.. Its pathway is protein modification; protein ubiquitination. Catalyzes the covalent attachment of ubiquitin to other proteins. Acts as an essential factor of the anaphase promoting complex/cyclosome (APC/C), a cell cycle-regulated ubiquitin ligase that controls progression through mitosis. Acts by specifically elongating 'Lys-11'-linked polyubiquitin chains initiated by the E2 enzyme ube2c/ubch10 on APC/C substrates, enhancing the degradation of APC/C substrates by the proteasome and promoting mitotic exit. The protein is Ubiquitin-conjugating enzyme E2 S (ube2s) of Aquarana catesbeiana (American bullfrog).